The primary structure comprises 366 residues: Putative F-box protein At1g26515 (366 aa).

Residues 1-20 (MKTRSKKTKTENNQEKSKEK) are disordered. Over residues 8–20 (TKTENNQEKSKEK) the composition is skewed to basic and acidic residues. The region spanning 20–66 (KNKFDQLPLDLEIEIFRRLPLKSVARFLTLSKSCAATIRSPSFITSF) is the F-box domain.

The sequence is that of Putative F-box protein At1g26515 from Arabidopsis thaliana (Mouse-ear cress).